The chain runs to 200 residues: Ribosome maturation factor RimP (200 aa).

This sequence belongs to the RimP family.

It localises to the cytoplasm. Its function is as follows. Required for maturation of 30S ribosomal subunits. The protein is Ribosome maturation factor RimP of Polaromonas sp. (strain JS666 / ATCC BAA-500).